The primary structure comprises 463 residues: Elongation factor 1-alpha (463 aa).

Residues 5-242 form the tr-type G domain; sequence KTHINIVVIG…DAILPPARPT (238 aa). Residues 14–21 form a G1 region; sequence GHVDSGKS. Position 14 to 21 (14 to 21) interacts with GTP; it reads GHVDSGKS. The tract at residues 70–74 is G2; sequence GITID. The segment at 91–94 is G3; it reads DAPG. GTP is bound by residues 91-95 and 153-156; these read DAPGH and NKMD. The interval 153-156 is G4; it reads NKMD. The G5 stretch occupies residues 194–196; that stretch reads SGW. E301 and E374 each carry 5-glutamyl glycerylphosphorylethanolamine.

It belongs to the TRAFAC class translation factor GTPase superfamily. Classic translation factor GTPase family. EF-Tu/EF-1A subfamily.

It localises to the cytoplasm. Its function is as follows. This protein promotes the GTP-dependent binding of aminoacyl-tRNA to the A-site of ribosomes during protein biosynthesis. In Bombyx mori (Silk moth), this protein is Elongation factor 1-alpha.